Consider the following 236-residue polypeptide: Carboxymethylenebutenolidase (236 aa).

Active-site residues include C123, D171, and H202.

This sequence belongs to the dienelactone hydrolase family. In terms of assembly, monomer.

The enzyme catalyses 2-(5-oxo-2,5-dihydrofuran-2-ylidene)acetate + H2O = 4-oxohex-2-enedioate + H(+). It functions in the pathway aromatic compound metabolism; 3-chlorocatechol degradation. Ring cleavage of cyclic ester dienelactone to produce maleylacetate. The chain is Carboxymethylenebutenolidase (clcD) from Pseudomonas knackmussii (strain DSM 6978 / CCUG 54928 / LMG 23759 / B13).